Consider the following 137-residue polypeptide: Proofreading thioesterase EntH (137 aa).

Glu-63 functions as the Nucleophile or proton acceptor in the catalytic mechanism.

Belongs to the thioesterase PaaI family. As to quaternary structure, homotetramer. Dimer of dimers. Interacts specifically with the aryl carrier protein (ArCP) domain of EntB.

The protein localises to the cytoplasm. It functions in the pathway siderophore biosynthesis; enterobactin biosynthesis. In terms of biological role, required for optimal enterobactin synthesis. Acts as a proofreading enzyme that prevents EntB misacylation by hydrolyzing the thioester bound existing between EntB and wrongly charged molecules. The protein is Proofreading thioesterase EntH of Cronobacter turicensis (strain DSM 18703 / CCUG 55852 / LMG 23827 / z3032).